Reading from the N-terminus, the 349-residue chain is MRPGRARALRQFTLSTGKSAGRNSSGRITVFHRGGGSKRLLRRIDLKRSTSSMGIVESIEYDPNRSSQIALVRWIKGGCQKKMNTIEKFAPPRKILEPTTNTISGLFSFSFLPGKVDKRKVACFSPGLMAAYVVVGLPTGMPPLSSSKSAFASKGAGSTKTLVKDVFFSAFSSPKAKRETASLAFASSFGFPRIAVAGAKPAFFAPRMRQKVRGKSTFSLCEVQKGRTHSILWAHRIKGKAGLSWQSFRRQDTLGLVGAAGHKKSKPKTDQGNLPAKPIGERAKQLKALRGLRAKDGACKVDRAPVTYIIASHQLEAGKMVMNCDWSKPSTSSFLQSAQNDHPKPLFTV.

It belongs to the universal ribosomal protein uL2 family. In terms of assembly, component of the mitochondrial ribosome large subunit.

The protein localises to the mitochondrion. In Arabidopsis thaliana (Mouse-ear cress), this protein is Large ribosomal subunit protein uL2mz, N-terminal part.